Reading from the N-terminus, the 750-residue chain is MIIRSPEPEVKILVDRDPIKTSFEEWAKPGHFSRTIAKGPDTTTWIWNLHADAHDFDSHTSDLEEISRKVFSAHFGQLSIIFLWLSGMYFHGARFSNYEAWLSDPTHIGPSAQVVWPIVGQEILNGDVGGGFRGIQITSGFFQIWRASGITSELQLYCTAIGALVFAALMLFAGWFHYHKAAPKLAWFQDVESMLNHHLAGLLGLGSLSWAGHQVHVSLPINQFLNAGVDPKEIPLPHEFILNRDLLAQLYPSFAEGATPFFTLNWSKYSEFLTFRGGLDPVTGGLWLTDIAHHHLAIAILFLIAGHMYRTNWGIGHGLKDILEAHKGPFTGQGHKGLYEILTTSWHAQLSLNLAMLGSLTIVVAHHMYSMPPYPYLATDYATQLSLFTHHMWIGGFLIVGAAAHAAIFMVRDYDPTNRYNDLLDRVLRHRDAIISHLNWACIFLGFHSFGLYIHNDTMSALGRPQDMFSDTAIQLQPVFAQWIQKTHALAPGVTAPGETASTSLTWGGGELVAVGGKVALLPIPLGTADFLVHHIHAFTIHVTVLILLKGVLFARSSRLIPDKASLGFRFPCDGPGRGGTCQVSAWDHVFLGLFWMYNAISVVIFHFSWKMQSDVWGSISDQGVVTHITGGNFAQSSITINGWLRDFLWAQASQVIQSYGSSLSAYGLFFLGAHFVWAFSLMFLFSGRGYWQELIESIVWAHNKLKVAPATQPRALSIVQGRAVGVTHYLLGGIATTWAFFLARIIAVG.

Transmembrane regions (helical) follow at residues 70 to 93 (VFSAHFGQLSIIFLWLSGMYFHGA), 156 to 179 (LYCTAIGALVFAALMLFAGWFHYH), 195 to 219 (LNHHLAGLLGLGSLSWAGHQVHVSL), 291 to 309 (IAHHHLAIAILFLIAGHMY), 346 to 369 (WHAQLSLNLAMLGSLTIVVAHHMY), 385 to 411 (LSLFTHHMWIGGFLIVGAAAHAAIFMV), 433 to 455 (AIISHLNWACIFLGFHSFGLYIH), and 531 to 549 (FLVHHIHAFTIHVTVLILL). [4Fe-4S] cluster-binding residues include Cys573 and Cys582. Transmembrane regions (helical) follow at residues 589–610 (HVFLGLFWMYNAISVVIFHFSW) and 664–686 (LSAYGLFFLGAHFVWAFSLMFLF). His675 contacts chlorophyll a'. Positions 683 and 691 each coordinate chlorophyll a. Residue Trp692 participates in phylloquinone binding. The chain crosses the membrane as a helical span at residues 724–744 (AVGVTHYLLGGIATTWAFFLA).

This sequence belongs to the PsaA/PsaB family. The PsaA/B heterodimer binds the P700 chlorophyll special pair and subsequent electron acceptors. PSI consists of a core antenna complex that captures photons, and an electron transfer chain that converts photonic excitation into a charge separation. The eukaryotic PSI reaction center is composed of at least 11 subunits. P700 is a chlorophyll a/chlorophyll a' dimer, A0 is one or more chlorophyll a, A1 is one or both phylloquinones and FX is a shared 4Fe-4S iron-sulfur center. serves as cofactor.

The protein resides in the plastid. The protein localises to the chloroplast thylakoid membrane. It catalyses the reaction reduced [plastocyanin] + hnu + oxidized [2Fe-2S]-[ferredoxin] = oxidized [plastocyanin] + reduced [2Fe-2S]-[ferredoxin]. Its function is as follows. PsaA and PsaB bind P700, the primary electron donor of photosystem I (PSI), as well as the electron acceptors A0, A1 and FX. PSI is a plastocyanin-ferredoxin oxidoreductase, converting photonic excitation into a charge separation, which transfers an electron from the donor P700 chlorophyll pair to the spectroscopically characterized acceptors A0, A1, FX, FA and FB in turn. Oxidized P700 is reduced on the lumenal side of the thylakoid membrane by plastocyanin. The chain is Photosystem I P700 chlorophyll a apoprotein A1 from Aethionema grandiflorum (Persian stone-cress).